Reading from the N-terminus, the 211-residue chain is Superoxide dismutase [Fe] (211 aa).

Positions 34, 85, 171, and 175 each coordinate Fe cation.

The protein belongs to the iron/manganese superoxide dismutase family. Requires Fe cation as cofactor.

The enzyme catalyses 2 superoxide + 2 H(+) = H2O2 + O2. Functionally, destroys superoxide anion radicals which are normally produced within the cells and which are toxic to biological systems. In Acidianus ambivalens (Desulfurolobus ambivalens), this protein is Superoxide dismutase [Fe] (sod).